The sequence spans 406 residues: Cysteine desulfurase (406 aa).

An N6-(pyridoxal phosphate)lysine modification is found at Lys226. Cys364 acts as the Cysteine persulfide intermediate in catalysis.

This sequence belongs to the class-V pyridoxal-phosphate-dependent aminotransferase family. Csd subfamily. Homodimer. Interacts with SufE and the SufBCD complex composed of SufB, SufC and SufD. The interaction with SufE is required to mediate the direct transfer of the sulfur atom from the S-sulfanylcysteine. It depends on pyridoxal 5'-phosphate as a cofactor.

The protein resides in the cytoplasm. The catalysed reaction is (sulfur carrier)-H + L-cysteine = (sulfur carrier)-SH + L-alanine. It catalyses the reaction L-selenocysteine + AH2 = hydrogenselenide + L-alanine + A + H(+). It functions in the pathway cofactor biosynthesis; iron-sulfur cluster biosynthesis. Its function is as follows. Cysteine desulfurases mobilize the sulfur from L-cysteine to yield L-alanine, an essential step in sulfur metabolism for biosynthesis of a variety of sulfur-containing biomolecules. Component of the suf operon, which is activated and required under specific conditions such as oxidative stress and iron limitation. Acts as a potent selenocysteine lyase in vitro, that mobilizes selenium from L-selenocysteine. Selenocysteine lyase activity is however unsure in vivo. The protein is Cysteine desulfurase of Escherichia coli O139:H28 (strain E24377A / ETEC).